A 274-amino-acid chain; its full sequence is Orotidine 5'-phosphate decarboxylase (274 aa).

Residues aspartate 40, 62–64, 93–102, tyrosine 227, and arginine 245 contribute to the substrate site; these read KTH and DRKFVDIGNT. Lysine 95 serves as the catalytic Proton donor.

It belongs to the OMP decarboxylase family.

It carries out the reaction orotidine 5'-phosphate + H(+) = UMP + CO2. The protein operates within pyrimidine metabolism; UMP biosynthesis via de novo pathway; UMP from orotate: step 2/2. The protein is Orotidine 5'-phosphate decarboxylase (URA3) of Coccidioides posadasii (strain RMSCC 757 / Silveira) (Valley fever fungus).